A 61-amino-acid polypeptide reads, in one-letter code: Large ribosomal subunit protein uL30 (61 aa).

It belongs to the universal ribosomal protein uL30 family. In terms of assembly, part of the 50S ribosomal subunit.

In Lactobacillus delbrueckii subsp. bulgaricus (strain ATCC 11842 / DSM 20081 / BCRC 10696 / JCM 1002 / NBRC 13953 / NCIMB 11778 / NCTC 12712 / WDCM 00102 / Lb 14), this protein is Large ribosomal subunit protein uL30.